A 313-amino-acid polypeptide reads, in one-letter code: tRNA dimethylallyltransferase (313 aa).

11-18 (GPTASGKT) provides a ligand contact to ATP. Substrate is bound at residue 13–18 (TASGKT). Interaction with substrate tRNA regions lie at residues 36 to 39 (DSAL), 160 to 164 (QRINR), and 241 to 246 (RCVGYR).

Belongs to the IPP transferase family. In terms of assembly, monomer. Mg(2+) serves as cofactor.

It carries out the reaction adenosine(37) in tRNA + dimethylallyl diphosphate = N(6)-dimethylallyladenosine(37) in tRNA + diphosphate. Catalyzes the transfer of a dimethylallyl group onto the adenine at position 37 in tRNAs that read codons beginning with uridine, leading to the formation of N6-(dimethylallyl)adenosine (i(6)A). The polypeptide is tRNA dimethylallyltransferase (Haemophilus ducreyi (strain 35000HP / ATCC 700724)).